A 341-amino-acid polypeptide reads, in one-letter code: GTPase Obg (341 aa).

In terms of domain architecture, Obg spans 2-160; sequence SGFIDEVPIQ…FSLILELKLL (159 aa). In terms of domain architecture, OBG-type G spans 161–330; the sequence is ADIGIVGLPN…LLERIDKVFF (170 aa). Residues 167–174, 192–196, 215–218, 282–285, and 311–313 contribute to the GTP site; these read GLPNAGKS, FTTLS, DIPG, NKMD, and SAD. Mg(2+)-binding residues include S174 and T194.

This sequence belongs to the TRAFAC class OBG-HflX-like GTPase superfamily. OBG GTPase family. As to quaternary structure, monomer. It depends on Mg(2+) as a cofactor.

Its subcellular location is the cytoplasm. In terms of biological role, an essential GTPase which binds GTP, GDP and possibly (p)ppGpp with moderate affinity, with high nucleotide exchange rates and a fairly low GTP hydrolysis rate. Plays a role in control of the cell cycle, stress response, ribosome biogenesis and in those bacteria that undergo differentiation, in morphogenesis control. This Leptospira biflexa serovar Patoc (strain Patoc 1 / Ames) protein is GTPase Obg.